Reading from the N-terminus, the 640-residue chain is Chaperone protein DnaK (640 aa).

T198 carries the phosphothreonine; by autocatalysis modification. Residues 600–640 form a disordered region; the sequence is KTQGAGAEGSEQPHGEQEAGGAAKGETVVDADFEEVKDDKK. A compositionally biased stretch (acidic residues) spans 628-640; it reads VDADFEEVKDDKK.

This sequence belongs to the heat shock protein 70 family.

In terms of biological role, acts as a chaperone. In Geobacter sp. (strain M21), this protein is Chaperone protein DnaK.